The primary structure comprises 318 residues: MDIDASVENISKDTAEIIEVEELKELLKKDEKRAYVGFEPSGKVHLGHALTIKKMKTLQDAGFKITIFIANLHAYLNNKGTLDELNEVAKYNIKCFKALGLSEDTNFILGSDRMTPEYITEVFKAAKLTTIQRAQRSMALVSRNETHDVAQTLYPIMQALDIHDLDADIAVGGMEQRKIHMLAREILPRLGYRPPVCIHIPLIHGTDGSDKMSSSKGNFIAIDDTPKEIKNKINKSFCPIGVSEDNPVMEIAHYYIFDTHEKILIERPEKFGGNLELTEEELIQTYENEDLHPMDLKNTVSKYLIERLAPAREYMENN.

L-tyrosine is bound at residue tyrosine 35. Residues 40-48 carry the 'HIGH' region motif; it reads PSGKVHLGH. Residues tyrosine 154, glutamine 158, aspartate 161, and glutamine 176 each coordinate L-tyrosine. Residues 211-215 carry the 'KMSKS' region motif; the sequence is KMSSS. Serine 214 provides a ligand contact to ATP.

This sequence belongs to the class-I aminoacyl-tRNA synthetase family. TyrS type 3 subfamily. Homodimer.

It localises to the cytoplasm. It carries out the reaction tRNA(Tyr) + L-tyrosine + ATP = L-tyrosyl-tRNA(Tyr) + AMP + diphosphate + H(+). Functionally, catalyzes the attachment of tyrosine to tRNA(Tyr) in a two-step reaction: tyrosine is first activated by ATP to form Tyr-AMP and then transferred to the acceptor end of tRNA(Tyr). The polypeptide is Tyrosine--tRNA ligase (Methanosphaera stadtmanae (strain ATCC 43021 / DSM 3091 / JCM 11832 / MCB-3)).